Consider the following 95-residue polypeptide: Selenoprotein K (95 aa).

The chain crosses the membrane as a helical span at residues 20–42; the sequence is LSFITDFFWGIAEFVVLFFRTLL. The segment at 47–95 is disordered; sequence KKRRGYGSSSDSRYDDGRGPPGNPPRRRMGRINHLQGPNPPPMAGGUGR. U93 is a non-standard amino acid (selenocysteine).

It belongs to the selenoprotein K family. In terms of assembly, interacts with DERL1, DERL2, DERL3 and SELENOS. The SELENOK-SELENOS complex interacts with VCP. Interacts with ZDHHC6. Post-translationally, cleaved by CAPN2/m-calpain in resting macrophages but not in activated macrophages. Macrophage activation up-regulates expression of the calpain inhibitor CAST/calpastatin, resulting in inhibition of CAPN2 activity. Truncated SELENOK proteins produced by failed UGA/Sec decoding are ubiquitinated by the CRL2(KLHDC2) complex, which recognizes the diglycine (Gly-Gly) at the C-terminus of truncated SELENOK proteins.

The protein resides in the endoplasmic reticulum membrane. The protein localises to the cell membrane. Required for Ca(2+) flux in immune cells and plays a role in T-cell proliferation and in T-cell and neutrophil migration. Involved in endoplasmic reticulum-associated degradation (ERAD) of soluble glycosylated proteins. Required for palmitoylation and cell surface expression of CD36 and involved in macrophage uptake of low-density lipoprotein and in foam cell formation. Together with ZDHHC6, required for palmitoylation of ITPR1 in immune cells, leading to regulate ITPR1 stability and function. Plays a role in protection of cells from ER stress-induced apoptosis. Protects cells from oxidative stress when overexpressed in cardiomyocytes. The protein is Selenoprotein K of Bos taurus (Bovine).